The sequence spans 203 residues: LexA repressor (203 aa).

The H-T-H motif DNA-binding region spans 32–52 (RAEICTAFGFRSPNAAETHLR). Residues serine 121 and lysine 158 each act as for autocatalytic cleavage activity in the active site.

Belongs to the peptidase S24 family. Homodimer.

It catalyses the reaction Hydrolysis of Ala-|-Gly bond in repressor LexA.. In terms of biological role, represses a number of genes involved in the response to DNA damage (SOS response), including recA and lexA. In the presence of single-stranded DNA, RecA interacts with LexA causing an autocatalytic cleavage which disrupts the DNA-binding part of LexA, leading to derepression of the SOS regulon and eventually DNA repair. This Aromatoleum aromaticum (strain DSM 19018 / LMG 30748 / EbN1) (Azoarcus sp. (strain EbN1)) protein is LexA repressor.